A 157-amino-acid chain; its full sequence is Transcription elongation factor GreA (157 aa).

A compositionally biased stretch (basic and acidic residues) spans 25 to 43; the sequence is EGRAKVAEQLSEARDKGDL. Residues 25 to 47 form a disordered region; it reads EGRAKVAEQLSEARDKGDLSENA. The stretch at 43–79 forms a coiled coil; that stretch reads LSENAEYDAAKEAQEILERRIAKLEELMINARVINKD.

Belongs to the GreA/GreB family.

Functionally, necessary for efficient RNA polymerase transcription elongation past template-encoded arresting sites. The arresting sites in DNA have the property of trapping a certain fraction of elongating RNA polymerases that pass through, resulting in locked ternary complexes. Cleavage of the nascent transcript by cleavage factors such as GreA or GreB allows the resumption of elongation from the new 3'terminus. GreA releases sequences of 2 to 3 nucleotides. This chain is Transcription elongation factor GreA, found in Amoebophilus asiaticus (strain 5a2).